The following is a 151-amino-acid chain: RNA polymerase-binding transcription factor DksA (151 aa).

Residues 34–54 (EAQLSHFKRILEAWRNQLRDE) adopt a coiled-coil conformation. Zn(2+) contacts are provided by Cys114, Cys117, Cys135, and Cys138. Residues 114 to 138 (CESCGVEIGIRRLEARPTADLCIDC) form a dksA C4-type zinc finger.

The protein belongs to the DksA family. In terms of assembly, interacts directly with the RNA polymerase.

The protein localises to the cytoplasm. Transcription factor that acts by binding directly to the RNA polymerase (RNAP). Required for negative regulation of rRNA expression and positive regulation of several amino acid biosynthesis promoters. Also required for regulation of fis expression. In Salmonella typhi, this protein is RNA polymerase-binding transcription factor DksA.